The following is a 532-amino-acid chain: GH3 domain-containing protein (532 aa).

Residues 1-18 form the signal peptide; the sequence is MLLLWLLLLLLLLVPLLA. A disordered region spans residues 100-123; it reads LTQTSHTQEQESEETLPSPASPQY. 2 N-linked (GlcNAc...) asparagine glycosylation sites follow: N356 and N451.

The protein belongs to the GH3 family. As to expression, highly expressed in mammary tissues from mature virgins and at day 13 of pregnancy, and at lower level during lactation. Expressed at intermediate level in liver. Expressed at lower level in kidney, heart and brain.

The protein localises to the endoplasmic reticulum. It localises to the nucleus envelope. The sequence is that of GH3 domain-containing protein (Ghdc) from Mus musculus (Mouse).